Here is a 906-residue protein sequence, read N- to C-terminus: Alanine--tRNA ligase (906 aa).

The Zn(2+) site is built by His570, His574, Cys674, and His678.

This sequence belongs to the class-II aminoacyl-tRNA synthetase family. Zn(2+) serves as cofactor.

The protein localises to the cytoplasm. It carries out the reaction tRNA(Ala) + L-alanine + ATP = L-alanyl-tRNA(Ala) + AMP + diphosphate. Functionally, catalyzes the attachment of alanine to tRNA(Ala) in a two-step reaction: alanine is first activated by ATP to form Ala-AMP and then transferred to the acceptor end of tRNA(Ala). Also edits incorrectly charged Ser-tRNA(Ala) and Gly-tRNA(Ala) via its editing domain. In Ureaplasma parvum serovar 3 (strain ATCC 27815 / 27 / NCTC 11736), this protein is Alanine--tRNA ligase.